The chain runs to 225 residues: Phosphoribosyltransferase domain-containing protein 1 (225 aa).

N-acetylalanine is present on A2. The Mg(2+) site is built by E141 and D142. Residues 141-149 (EDVVGTGRT), K173, 194-195 (FV), and D201 each bind GMP. Residue D201 coordinates Mg(2+).

The protein belongs to the purine/pyrimidine phosphoribosyltransferase family. Homodimer.

Has low, barely detectable phosphoribosyltransferase activity (in vitro). Binds GMP, IMP and alpha-D-5-phosphoribosyl 1-pyrophosphate (PRPP). Is not expected to contribute to purine metabolism or GMP salvage. This is Phosphoribosyltransferase domain-containing protein 1 (PRTFDC1) from Homo sapiens (Human).